A 131-amino-acid polypeptide reads, in one-letter code: Profilin (131 aa).

The protein belongs to the profilin family. Occurs in many kinds of cells as a complex with monomeric actin in a 1:1 ratio.

It is found in the cytoplasm. Its subcellular location is the cytoskeleton. Binds to actin and affects the structure of the cytoskeleton. At high concentrations, profilin prevents the polymerization of actin, whereas it enhances it at low concentrations. Has a high affinity for poly-proline. The polypeptide is Profilin (Citrullus lanatus (Watermelon)).